Here is a 519-residue protein sequence, read N- to C-terminus: Cytochrome P450 52E2 (519 aa).

The next 2 helical transmembrane spans lie at 10 to 30 (MLGG…FYFI) and 44 to 64 (PIFF…NAWF). Cys461 contributes to the heme binding site.

The protein belongs to the cytochrome P450 family. Heme is required as a cofactor.

The protein localises to the membrane. Its function is as follows. Together with an NADPH cytochrome P450 the enzyme system catalyzes the terminal hydroxylation as the first step in the assimilation of alkanes and fatty acids. This chain is Cytochrome P450 52E2 (CYP52E2), found in Candida apicola (Yeast).